The chain runs to 276 residues: Ribosomal RNA small subunit methyltransferase A (276 aa).

S-adenosyl-L-methionine-binding residues include H15, L17, G42, E64, D89, and N108.

It belongs to the class I-like SAM-binding methyltransferase superfamily. rRNA adenine N(6)-methyltransferase family. RsmA subfamily.

The protein localises to the cytoplasm. It catalyses the reaction adenosine(1518)/adenosine(1519) in 16S rRNA + 4 S-adenosyl-L-methionine = N(6)-dimethyladenosine(1518)/N(6)-dimethyladenosine(1519) in 16S rRNA + 4 S-adenosyl-L-homocysteine + 4 H(+). Its function is as follows. Specifically dimethylates two adjacent adenosines (A1518 and A1519) in the loop of a conserved hairpin near the 3'-end of 16S rRNA in the 30S particle. May play a critical role in biogenesis of 30S subunits. This is Ribosomal RNA small subunit methyltransferase A from Prochlorococcus marinus (strain MIT 9312).